We begin with the raw amino-acid sequence, 213 residues long: Orotate phosphoribosyltransferase (213 aa).

Lysine 26 provides a ligand contact to 5-phospho-alpha-D-ribose 1-diphosphate. 34–35 (FF) lines the orotate pocket. 5-phospho-alpha-D-ribose 1-diphosphate contacts are provided by residues 72-73 (YK), arginine 99, lysine 100, lysine 103, histidine 105, and 124-132 (DDVITAGTA). Orotate is bound by residues threonine 128 and arginine 156.

It belongs to the purine/pyrimidine phosphoribosyltransferase family. PyrE subfamily. As to quaternary structure, homodimer. It depends on Mg(2+) as a cofactor.

It carries out the reaction orotidine 5'-phosphate + diphosphate = orotate + 5-phospho-alpha-D-ribose 1-diphosphate. The protein operates within pyrimidine metabolism; UMP biosynthesis via de novo pathway; UMP from orotate: step 1/2. Its function is as follows. Catalyzes the transfer of a ribosyl phosphate group from 5-phosphoribose 1-diphosphate to orotate, leading to the formation of orotidine monophosphate (OMP). The chain is Orotate phosphoribosyltransferase from Shigella dysenteriae serotype 1 (strain Sd197).